Consider the following 179-residue polypeptide: Large ribosomal subunit protein uL5 (179 aa).

It belongs to the universal ribosomal protein uL5 family. Part of the 50S ribosomal subunit; part of the 5S rRNA/L5/L18/L25 subcomplex. Contacts the 5S rRNA and the P site tRNA. Forms a bridge to the 30S subunit in the 70S ribosome.

Functionally, this is one of the proteins that bind and probably mediate the attachment of the 5S RNA into the large ribosomal subunit, where it forms part of the central protuberance. In the 70S ribosome it contacts protein S13 of the 30S subunit (bridge B1b), connecting the 2 subunits; this bridge is implicated in subunit movement. Contacts the P site tRNA; the 5S rRNA and some of its associated proteins might help stabilize positioning of ribosome-bound tRNAs. This Desulfovibrio desulfuricans (strain ATCC 27774 / DSM 6949 / MB) protein is Large ribosomal subunit protein uL5.